Reading from the N-terminus, the 158-residue chain is Ribosomal RNA large subunit methyltransferase H (158 aa).

Residues L73, G107, and 126–131 (FGEITL) contribute to the S-adenosyl-L-methionine site.

Belongs to the RNA methyltransferase RlmH family. In terms of assembly, homodimer.

It localises to the cytoplasm. It catalyses the reaction pseudouridine(1915) in 23S rRNA + S-adenosyl-L-methionine = N(3)-methylpseudouridine(1915) in 23S rRNA + S-adenosyl-L-homocysteine + H(+). Its function is as follows. Specifically methylates the pseudouridine at position 1915 (m3Psi1915) in 23S rRNA. This Rubrobacter xylanophilus (strain DSM 9941 / JCM 11954 / NBRC 16129 / PRD-1) protein is Ribosomal RNA large subunit methyltransferase H.